A 716-amino-acid polypeptide reads, in one-letter code: Putative proline--tRNA ligase C19C7.06 (716 aa).

Residues 655-675 (KNSARQVNGDEPEDEKAPSMG) form a disordered region.

It belongs to the class-II aminoacyl-tRNA synthetase family.

Its subcellular location is the cytoplasm. It carries out the reaction tRNA(Pro) + L-proline + ATP = L-prolyl-tRNA(Pro) + AMP + diphosphate. This chain is Putative proline--tRNA ligase C19C7.06 (prs1), found in Schizosaccharomyces pombe (strain 972 / ATCC 24843) (Fission yeast).